Consider the following 327-residue polypeptide: MAVDQRPLAIAVMGPTASGKTALALEAAERWNGEIVSVDSALVYRGLEIGAAKPDAAMRAAVPHHLLDLRDPWQVYSAAEFAADARQAIAQIVARGRLPILAGGTGLYFRALLEGLSQLPEADQAVRASIAAEAQQIGWAGLHAQLARVDPVAAARIHATDPQRIQRALEVYRISGRPISAWQALPPGPRLPVRVLKVVLAPRERAVLHARIAHRLDAMLAQDFLTEVRRLRALPQLQAVAAPLDLPAVRAVGYRQAWQYLDGAGSLAEFRDKAIQATRQLAKRQLTWLRGELDARWFDPERDRHQLEDAIVGFLADRPAVRQASGV.

14-21 (GPTASGKT) lines the ATP pocket. 16–21 (TASGKT) contributes to the substrate binding site. 2 interaction with substrate tRNA regions span residues 39 to 42 (DSAL) and 163 to 167 (QRIQR).

The protein belongs to the IPP transferase family. Monomer. Mg(2+) is required as a cofactor.

It catalyses the reaction adenosine(37) in tRNA + dimethylallyl diphosphate = N(6)-dimethylallyladenosine(37) in tRNA + diphosphate. Catalyzes the transfer of a dimethylallyl group onto the adenine at position 37 in tRNAs that read codons beginning with uridine, leading to the formation of N6-(dimethylallyl)adenosine (i(6)A). The polypeptide is tRNA dimethylallyltransferase (Xanthomonas axonopodis pv. citri (strain 306)).